The primary structure comprises 515 residues: Cytoplasmic tRNA 2-thiolation protein 2 (515 aa).

2 disordered regions span residues M1–R24 and L188–P217. C2 is subject to N-acetylcysteine. Phosphoserine is present on residues S415, S419, S435, and S508.

This sequence belongs to the CTU2/NCS2 family. As to quaternary structure, component of a complex at least composed of URM1, CTU2/NCS2 and CTU1/ATPBD3.

It is found in the cytoplasm. Its pathway is tRNA modification; 5-methoxycarbonylmethyl-2-thiouridine-tRNA biosynthesis. Functionally, plays a central role in 2-thiolation of mcm(5)S(2)U at tRNA wobble positions of tRNA(Lys), tRNA(Glu) and tRNA(Gln). May act by forming a heterodimer with CTU1/ATPBD3 that ligates sulfur from thiocarboxylated URM1 onto the uridine of tRNAs at wobble position. In Homo sapiens (Human), this protein is Cytoplasmic tRNA 2-thiolation protein 2.